Here is a 277-residue protein sequence, read N- to C-terminus: Large ribosomal subunit protein uL2 (277 aa).

2 disordered regions span residues 35-57 and 222-277; these read RPLH…QGGG and GVAM…NRRR. 2 stretches are compositionally biased toward basic residues: residues 37 to 57 and 268 to 277; these read LHSK…QGGG and VRRRKQNRRR.

Belongs to the universal ribosomal protein uL2 family. Part of the 50S ribosomal subunit. Forms a bridge to the 30S subunit in the 70S ribosome.

In terms of biological role, one of the primary rRNA binding proteins. Required for association of the 30S and 50S subunits to form the 70S ribosome, for tRNA binding and peptide bond formation. It has been suggested to have peptidyltransferase activity; this is somewhat controversial. Makes several contacts with the 16S rRNA in the 70S ribosome. This Frankia casuarinae (strain DSM 45818 / CECT 9043 / HFP020203 / CcI3) protein is Large ribosomal subunit protein uL2.